A 231-amino-acid polypeptide reads, in one-letter code: uncharacterized protein (231 aa).

This is an uncharacterized protein from Mycobacterium tuberculosis (strain ATCC 25618 / H37Rv).